Consider the following 496-residue polypeptide: Thiamine transporter 2 (496 aa).

At 1–7 (MDCYRTS) the chain is on the cytoplasmic side. The helical transmembrane segment at 8-28 (LSSSWIYPTVILCLFGFFSMM) threads the bilayer. Residues 29–53 (RPSEPFLIPYLSGPDKNLTSAEITN) lie on the Extracellular side of the membrane. N-linked (GlcNAc...) asparagine glycosylation is present at Asn45. Residues 54-74 (EIFPVWTYSYLVLLLPVFVLT) form a helical membrane-spanning segment. Topologically, residues 75-81 (DYVRYKP) are cytoplasmic. The helical transmembrane segment at 82–102 (VIILQGISFIITWLLLLFGQG) threads the bilayer. Residues 103–110 (VKTMQVVE) are Extracellular-facing. The helical transmembrane segment at 111–131 (FFYGMVTAAEVAYYAYIYSVV) threads the bilayer. The Cytoplasmic portion of the chain corresponds to 132–144 (SPEHYQRVSGYCR). The chain crosses the membrane as a helical span at residues 145–165 (SVTLAAYTAGSVLAQLLVSLA). N-linked (GlcNAc...) asparagine glycosylation is present at Asn166. The Extracellular portion of the chain corresponds to 166–169 (NMSY). Residues 170–190 (FYLNVISLASVSVAFLFSLFL) traverse the membrane as a helical segment. At 191–282 (PMPKKSMFFH…YSSKRLFYWS (92 aa)) the chain is on the cytoplasmic side. A helical transmembrane segment spans residues 283–303 (LWWAFATAGFNQVLNYVQILW). The Extracellular segment spans residues 304–316 (DYKAPSQDSSIYN). Residues 317–337 (GAVEAIATFGGAVAAFAVGYV) form a helical membrane-spanning segment. The Cytoplasmic portion of the chain corresponds to 338–342 (KVNWD). The chain crosses the membrane as a helical span at residues 343 to 363 (LLGELALVVFSVVNAGSLFLM). Residues 364–375 (HYTANIWACYAG) are Extracellular-facing. Residues 376–396 (YLIFKSSYMLLITIAVFQIAV) form a helical membrane-spanning segment. The Cytoplasmic segment spans residues 397 to 405 (NLNVERYAL). A helical membrane pass occupies residues 406 to 426 (VFGINTFIALVIQTIMTVIVV). Over 427–434 (DQRGLNLP) the chain is Extracellular. The helical transmembrane segment at 435-455 (VSIQFLVYGSYFAVIAGIFLM) threads the bilayer. Topologically, residues 456–496 (RSMYITYSTKSQKDVQSPAPSENPDVSHPEEESNIIMSTKL) are cytoplasmic. A disordered region spans residues 468–496 (KDVQSPAPSENPDVSHPEEESNIIMSTKL).

It belongs to the reduced folate carrier (RFC) transporter (TC 2.A.48) family. As to expression, widely expressed but most abundant in placenta, kidney and liver.

The protein localises to the membrane. It carries out the reaction thiamine(out) + H(+)(in) = thiamine(in) + H(+)(out). It catalyses the reaction pyridoxine(out) + n H(+)(out) = pyridoxine(in) + n H(+)(in). Pyridoxine transport is inhibited by carbonyl cyanide p-trifluoromethoxyphenylhydrazone (FCCP) and carbonyl cyanide m-chlorophenylhydrazone (CCCP). Functionally, mediates high affinity thiamine uptake, probably via a proton anti-port mechanism. Has no folate transport activity. Mediates H(+)-dependent pyridoxine transport. The sequence is that of Thiamine transporter 2 (SLC19A3) from Homo sapiens (Human).